A 734-amino-acid chain; its full sequence is Casein kinase II subunit alpha'-interacting protein (734 aa).

The segment at 608 to 654 (SLLPSTSSSTSSSSTTSSSSSVASASSDSSSSSSSSSSFSISSSSSP) is disordered. Residues 612-654 (STSSSTSSSSTTSSSSSVASASSDSSSSSSSSSSFSISSSSSP) are compositionally biased toward low complexity.

As to quaternary structure, interacts (via C-terminus) with CSNK2A2. Phosphorylated by CK2 (casein kinase II), specifically by complexes containing catalytic subunit CSNK2A2.

The protein resides in the nucleus. Functionally, may play a role in chromatin regulation of male germ cells. This Homo sapiens (Human) protein is Casein kinase II subunit alpha'-interacting protein.